A 485-amino-acid chain; its full sequence is Cysteine--tRNA ligase (485 aa).

C27 is a Zn(2+) binding site. Positions 29-39 match the 'HIGH' region motif; that stretch reads ITAYDLCHLGH. Zn(2+) contacts are provided by C208, H233, and E237. The 'KMSKS' region motif lies at 265–269; the sequence is KMSKS. Position 268 (K268) interacts with ATP.

The protein belongs to the class-I aminoacyl-tRNA synthetase family. In terms of assembly, monomer. Zn(2+) is required as a cofactor.

It is found in the cytoplasm. The enzyme catalyses tRNA(Cys) + L-cysteine + ATP = L-cysteinyl-tRNA(Cys) + AMP + diphosphate. The chain is Cysteine--tRNA ligase from Oleidesulfovibrio alaskensis (strain ATCC BAA-1058 / DSM 17464 / G20) (Desulfovibrio alaskensis).